Here is a 233-residue protein sequence, read N- to C-terminus: ATP-dependent dethiobiotin synthetase BioD (233 aa).

An ATP-binding site is contributed by Glu-12–Tyr-17. Residue Thr-16 participates in Mg(2+) binding. Lys-37 is a catalytic residue. Residues Asp-54, Glu-120 to Gly-123, and Asn-186 to Asp-187 contribute to the ATP site. Mg(2+) contacts are provided by Asp-54 and Glu-120.

It belongs to the dethiobiotin synthetase family. Homodimer. It depends on Mg(2+) as a cofactor.

The protein localises to the cytoplasm. It carries out the reaction (7R,8S)-7,8-diammoniononanoate + CO2 + ATP = (4R,5S)-dethiobiotin + ADP + phosphate + 3 H(+). It functions in the pathway cofactor biosynthesis; biotin biosynthesis; biotin from 7,8-diaminononanoate: step 1/2. Functionally, catalyzes a mechanistically unusual reaction, the ATP-dependent insertion of CO2 between the N7 and N8 nitrogen atoms of 7,8-diaminopelargonic acid (DAPA, also called 7,8-diammoniononanoate) to form a ureido ring. This Alteromonas mediterranea (strain DSM 17117 / CIP 110805 / LMG 28347 / Deep ecotype) protein is ATP-dependent dethiobiotin synthetase BioD.